A 382-amino-acid polypeptide reads, in one-letter code: MSLKEKTQSLFANAFGYPATHTIQAPGRVNLIGEHTDYNDGFVLPCAIDYQTVISCAPRDDRKVRVMAADYENQLDEFSLNAPIVAHENYQWANYVRGVVKHLQLRNNSFGGVDMVISGNVPQGAGLSSSASLEVAVGTVLQQLYHLPLDGAQIALNGQEAENQFVGCNCGIMDQLISALGKKDHALLIDCRSLGTKAVSMPKGVAVVIINSNFKRTLVGSEYNTRREQCETGARFFQQPALRDVTIEEFNAVAHELDPIVAKRVRHILTENARTVEAASALEQGDLKRMDELMAESHASMRDDFEITVPQIDTLVEIVKAVIGDKGGVRMTGGGFGGCIVALIPEELVPAVQQAVAEQYEAKTGIKETFYVCKPSQGAGQC.

A substrate-binding site is contributed by 34-37 (EHTD). 124–130 (GAGLSSS) serves as a coordination point for ATP. Ser-130 and Glu-162 together coordinate Mg(2+). The Proton acceptor role is filled by Asp-174. Tyr-223 contacts substrate.

This sequence belongs to the GHMP kinase family. GalK subfamily.

Its subcellular location is the cytoplasm. It carries out the reaction alpha-D-galactose + ATP = alpha-D-galactose 1-phosphate + ADP + H(+). The protein operates within carbohydrate metabolism; galactose metabolism. Catalyzes the transfer of the gamma-phosphate of ATP to D-galactose to form alpha-D-galactose-1-phosphate (Gal-1-P). In Shigella flexneri serotype 5b (strain 8401), this protein is Galactokinase.